The chain runs to 224 residues: Imidazole glycerol phosphate synthase subunit HisH (224 aa).

Residues 5–214 (DTIIIDTGCA…MKMNAGSFAG (210 aa)) form the Glutamine amidotransferase type-1 domain. Residue C80 is the Nucleophile of the active site. Active-site residues include H189 and E191.

In terms of assembly, heterodimer of HisH and HisF.

Its subcellular location is the cytoplasm. The catalysed reaction is 5-[(5-phospho-1-deoxy-D-ribulos-1-ylimino)methylamino]-1-(5-phospho-beta-D-ribosyl)imidazole-4-carboxamide + L-glutamine = D-erythro-1-(imidazol-4-yl)glycerol 3-phosphate + 5-amino-1-(5-phospho-beta-D-ribosyl)imidazole-4-carboxamide + L-glutamate + H(+). The enzyme catalyses L-glutamine + H2O = L-glutamate + NH4(+). It participates in amino-acid biosynthesis; L-histidine biosynthesis; L-histidine from 5-phospho-alpha-D-ribose 1-diphosphate: step 5/9. IGPS catalyzes the conversion of PRFAR and glutamine to IGP, AICAR and glutamate. The HisH subunit catalyzes the hydrolysis of glutamine to glutamate and ammonia as part of the synthesis of IGP and AICAR. The resulting ammonia molecule is channeled to the active site of HisF. The chain is Imidazole glycerol phosphate synthase subunit HisH from Shewanella loihica (strain ATCC BAA-1088 / PV-4).